A 184-amino-acid polypeptide reads, in one-letter code: Heme transporter hrg-4 (184 aa).

The chain crosses the membrane as a helical span at residues 19 to 39; that stretch reads IGWTIFGIVFGISAILTYAIK. A glycan (N-linked (GlcNAc...) asparagine) is linked at Asn42. The next 3 helical transmembrane spans lie at 46–66, 87–107, and 124–146; these read TATT…YWAL, VFIG…AGIT, and IYFS…WSLV.

The protein belongs to the HRG family.

The protein localises to the cell membrane. Heme transporter that mediates heme uptake across the plasma membrane. In Caenorhabditis elegans, this protein is Heme transporter hrg-4.